We begin with the raw amino-acid sequence, 310 residues long: Forkhead box protein pes-1 (310 aa).

Positions 1–16 are enriched in polar residues; sequence MLPLSISTSPDPASQF. Disordered regions lie at residues 1–37, 58–77, 92–126, and 217–242; these read MLPL…GTAK, VSPS…SPAP, KQSS…SNPN, and SLRR…PNPI. The span at 17 to 35 shows a compositional bias: low complexity; the sequence is PTVPDLPTLTPTPSPTSGT. Positions 128–220 form a DNA-binding region, fork-head; it reads RPAYSYNALI…IGKDCGSLRR (93 aa). The segment covering 218 to 231 has biased composition (basic residues); the sequence is LRRKKNGKPRKYSK.

The protein resides in the nucleus. The protein localises to the cytoplasm. Functionally, transcription factor. Plays a role in embryogenesis and later development, perhaps acting redundantly with forkhead protein fkh-2. This chain is Forkhead box protein pes-1, found in Caenorhabditis briggsae.